A 480-amino-acid chain; its full sequence is MQHQVLGLGIAGLAAARLLRAQGYEVLVWDEQDSPLLRQRQAELNQEGIPVRLGQPFQLAEGVKQVVVSPGIAWDHPLLQAVRQQGIPVVGEAELAWIYLDHLPWVGITGTNGKSTTTALVAEMFKAAGLQGIPCGNIGLPLSQVALATLQGKLKPDWIVAELSSYQLEASSRLMSSTPGGPPRIGVWTTFTPDHLERHGTLERYASFKARLLDRAQWRVLNGEDPYLCRRRQDWEKTYWISLAAPQLCCDQDPTATLDLRENRLYIQGEMVAELEDFAERCPGQHNLQNLLLAAAAARLAGLPNVAIQKAIRSFAGMPHRLERVAQIQVGATPIRFVNDSKATNYEAGWVALNALSPPIILIAGGRAKQGDPGAWLRLIRAKVARVLLMGESAPVLAEALQGIHYTDVELVPTLDVAVERAFAAACSLSRQAQRLGKPAQPITVLLSPACASFDQYSSFEHRGNHFRACCQALQGSLEC.

110–116 (GTNGKST) lines the ATP pocket.

Belongs to the MurCDEF family.

The protein localises to the cytoplasm. The catalysed reaction is UDP-N-acetyl-alpha-D-muramoyl-L-alanine + D-glutamate + ATP = UDP-N-acetyl-alpha-D-muramoyl-L-alanyl-D-glutamate + ADP + phosphate + H(+). It participates in cell wall biogenesis; peptidoglycan biosynthesis. Functionally, cell wall formation. Catalyzes the addition of glutamate to the nucleotide precursor UDP-N-acetylmuramoyl-L-alanine (UMA). This chain is UDP-N-acetylmuramoylalanine--D-glutamate ligase, found in Synechococcus sp. (strain JA-2-3B'a(2-13)) (Cyanobacteria bacterium Yellowstone B-Prime).